The following is a 326-amino-acid chain: Phosphatidylinositol:ceramide inositolphosphotransferase (326 aa).

6 helical membrane passes run 33-53 (LLLA…GVHY), 82-102 (SVFT…FIYH), 115-135 (VLAF…STQL), 169-189 (VLFG…LVFV), 199-219 (RLIK…IIAS), and 222-242 (HYSV…FFID). His181 is an active-site residue. Residues His222 and Asp226 contribute to the active site. The disordered stretch occupies residues 306–326 (MNGKHGEDINHTLSDATPNGT). The span at 316 to 326 (HTLSDATPNGT) shows a compositional bias: polar residues.

The protein belongs to the sphingomyelin synthase family.

It localises to the golgi apparatus. The protein resides in the trans-Golgi network membrane. Its function is as follows. Catalyzes the transfer of the phosphorylinositol group from phosphatidylinositol (PI) to phytoceramide, an essential step in sphingolipid biosynthesis. May play an important role in modulating plant programmed cell death (PCD) associated with defense (e.g. toward Golovinomyces cichoracearum) by promoting sphingolipid metabolism and regulating ceramide accumulation. This Oryza sativa subsp. indica (Rice) protein is Phosphatidylinositol:ceramide inositolphosphotransferase (ERH1).